Reading from the N-terminus, the 137-residue chain is Phosphoribosyl-AMP cyclohydrolase (137 aa).

Mg(2+) is bound at residue D83. Position 84 (C84) interacts with Zn(2+). 2 residues coordinate Mg(2+): D85 and D87. 2 residues coordinate Zn(2+): C101 and C108.

It belongs to the PRA-CH family. Homodimer. The cofactor is Mg(2+). Zn(2+) is required as a cofactor.

The protein localises to the cytoplasm. The catalysed reaction is 1-(5-phospho-beta-D-ribosyl)-5'-AMP + H2O = 1-(5-phospho-beta-D-ribosyl)-5-[(5-phospho-beta-D-ribosylamino)methylideneamino]imidazole-4-carboxamide. The protein operates within amino-acid biosynthesis; L-histidine biosynthesis; L-histidine from 5-phospho-alpha-D-ribose 1-diphosphate: step 3/9. Its function is as follows. Catalyzes the hydrolysis of the adenine ring of phosphoribosyl-AMP. This chain is Phosphoribosyl-AMP cyclohydrolase, found in Burkholderia mallei (strain ATCC 23344).